The chain runs to 291 residues: MFIIELIKGIILGVVEGLTEFAPVSSTGHMILVDDMWLKSSEFLGSQSAFTFKIVIQLGSVFAAAWVFRERFLEILHIGKHKHVEGENDQQRRSKPRRLNLLHVLVGMVPAGILGLLFDDFIEEHLFSVPTVMIGLFVGAIYMIIADKYSVKVKNPQTVDQINYFQAFVIGISQAVAMWPGFSRSGSTISTGVLMKLNHKAASDFTFIMAVPIMLAASGLSLLKHYQDIQIADIPFYILGFLAAFTVGLIAIKTFLHLSNKIKLIPFAIYRIVLVIFIAILYFGFGIGKGI.

The next 8 helical transmembrane spans lie at methionine 1–phenylalanine 21, serine 48–phenylalanine 68, leucine 102–isoleucine 122, leucine 126–alanine 146, isoleucine 162–phenylalanine 182, serine 203–leucine 223, isoleucine 231–alanine 251, and phenylalanine 267–isoleucine 287.

It belongs to the UppP family.

It is found in the cell membrane. The enzyme catalyses di-trans,octa-cis-undecaprenyl diphosphate + H2O = di-trans,octa-cis-undecaprenyl phosphate + phosphate + H(+). In terms of biological role, catalyzes the dephosphorylation of undecaprenyl diphosphate (UPP). Confers resistance to bacitracin. Is also required for virulence. The chain is Undecaprenyl-diphosphatase (uppP) from Staphylococcus aureus.